A 387-amino-acid polypeptide reads, in one-letter code: Succinate--CoA ligase [ADP-forming] subunit beta (387 aa).

Residues 9 to 236 (KELFAKHNVP…RDATDPLELK (228 aa)) enclose the ATP-grasp domain. ATP-binding positions include Lys-45, 52-54 (GRG), Ser-94, and Glu-99. The Mg(2+) site is built by Asn-191 and Asp-205. Substrate-binding positions include Asn-256 and 318–320 (GIT).

This sequence belongs to the succinate/malate CoA ligase beta subunit family. As to quaternary structure, heterotetramer of two alpha and two beta subunits. Mg(2+) is required as a cofactor.

The enzyme catalyses succinate + ATP + CoA = succinyl-CoA + ADP + phosphate. The catalysed reaction is GTP + succinate + CoA = succinyl-CoA + GDP + phosphate. The protein operates within carbohydrate metabolism; tricarboxylic acid cycle; succinate from succinyl-CoA (ligase route): step 1/1. In terms of biological role, succinyl-CoA synthetase functions in the citric acid cycle (TCA), coupling the hydrolysis of succinyl-CoA to the synthesis of either ATP or GTP and thus represents the only step of substrate-level phosphorylation in the TCA. The beta subunit provides nucleotide specificity of the enzyme and binds the substrate succinate, while the binding sites for coenzyme A and phosphate are found in the alpha subunit. This chain is Succinate--CoA ligase [ADP-forming] subunit beta, found in Mycolicibacterium smegmatis (strain ATCC 700084 / mc(2)155) (Mycobacterium smegmatis).